We begin with the raw amino-acid sequence, 177 residues long: von Ebner gland protein 1 (177 aa).

An N-terminal signal peptide occupies residues 1–18; sequence MKALLLTFGLSLLAALQA. Cys80 and Cys172 form a disulfide bridge.

This sequence belongs to the calycin superfamily. Lipocalin family. In terms of assembly, homodimer.

It localises to the secreted. Could play a role in taste reception. Could be necessary for the concentration and delivery of sapid molecules in the gustatory system. The polypeptide is von Ebner gland protein 1 (Vegp1) (Rattus norvegicus (Rat)).